We begin with the raw amino-acid sequence, 229 residues long: Orotidine 5'-phosphate decarboxylase (229 aa).

Residues aspartate 10, lysine 32, 59–68 (DLKFHDIPNT), threonine 119, arginine 180, glutamine 189, glycine 209, and arginine 210 contribute to the substrate site. The active-site Proton donor is lysine 61.

This sequence belongs to the OMP decarboxylase family. Type 1 subfamily. In terms of assembly, homodimer.

It carries out the reaction orotidine 5'-phosphate + H(+) = UMP + CO2. The protein operates within pyrimidine metabolism; UMP biosynthesis via de novo pathway; UMP from orotate: step 2/2. In terms of biological role, catalyzes the decarboxylation of orotidine 5'-monophosphate (OMP) to uridine 5'-monophosphate (UMP). In Legionella pneumophila (strain Corby), this protein is Orotidine 5'-phosphate decarboxylase.